Here is a 530-residue protein sequence, read N- to C-terminus: Ubiquitin carboxyl-terminal hydrolase 17-like protein 20 (530 aa).

The region spanning 80 to 375 (AGLQNMGNTC…QAYVLFYIQK (296 aa)) is the USP domain. Cys-89 acts as the Nucleophile in catalysis. Catalysis depends on His-334, which acts as the Proton acceptor. 2 stretches are compositionally biased toward basic and acidic residues: residues 382 to 392 (SESVSRGREPR) and 398 to 413 (DTDR…RDHP). Disordered regions lie at residues 382-413 (SESV…RDHP) and 509-530 (RGRA…LVCQ). Basic residues predominate over residues 510-524 (GRARRSKGKNKHSKR).

Belongs to the peptidase C19 family. USP17 subfamily.

It is found in the nucleus. It localises to the endoplasmic reticulum. It catalyses the reaction Thiol-dependent hydrolysis of ester, thioester, amide, peptide and isopeptide bonds formed by the C-terminal Gly of ubiquitin (a 76-residue protein attached to proteins as an intracellular targeting signal).. Deubiquitinating enzyme that removes conjugated ubiquitin from specific proteins to regulate different cellular processes that may include cell proliferation, progression through the cell cycle, apoptosis, cell migration, and the cellular response to viral infection. This is Ubiquitin carboxyl-terminal hydrolase 17-like protein 20 (USP17L20) from Homo sapiens (Human).